Reading from the N-terminus, the 129-residue chain is Fluoride-specific ion channel FluC 2 (129 aa).

Transmembrane regions (helical) follow at residues 3-23 (FLYV…MNLW), 32-52 (ATLA…QFLA), 59-79 (LVIL…FSAF), and 90-110 (GAWL…LIMV). 2 residues coordinate Na(+): Gly71 and Thr74.

This sequence belongs to the fluoride channel Fluc/FEX (TC 1.A.43) family.

The protein localises to the cell membrane. It catalyses the reaction fluoride(in) = fluoride(out). Na(+) is not transported, but it plays an essential structural role and its presence is essential for fluoride channel function. Its function is as follows. Fluoride-specific ion channel. Important for reducing fluoride concentration in the cell, thus reducing its toxicity. The polypeptide is Fluoride-specific ion channel FluC 2 (Listeria monocytogenes serotype 4b (strain F2365)).